Here is a 385-residue protein sequence, read N- to C-terminus: Endoglucanase 1 (385 aa).

Residues 1-17 form the signal peptide; sequence MKLVFSALASLLSGASA. N-linked (GlcNAc...) asparagine glycosylation is found at Asn93 and Asn140. The active-site Proton donor is the Glu176. N-linked (GlcNAc...) asparagine glycosylation is found at Asn200 and Asn237. The active-site Nucleophile is the Glu284. 2 N-linked (GlcNAc...) asparagine glycosylation sites follow: Asn289 and Asn331.

This sequence belongs to the glycosyl hydrolase 5 (cellulase A) family.

It carries out the reaction Endohydrolysis of (1-&gt;4)-beta-D-glucosidic linkages in cellulose, lichenin and cereal beta-D-glucans.. The protein operates within glycan metabolism; cellulose degradation. Its function is as follows. Active towards carboxymethyl cellulose. In Robillarda sp. (strain Y-20), this protein is Endoglucanase 1 (eg 1).